We begin with the raw amino-acid sequence, 183 residues long: ADP-ribosylation factor-like protein 1 (183 aa).

G2 is lipidated: N-myristoyl glycine. Residues 25–32 (GLDGAGKT), 68–72 (DLGGQ), and 127–130 (NKQD) contribute to the GTP site.

Belongs to the small GTPase superfamily. Arf family. As to quaternary structure, homodimer. Interacts with IMH1 (via GRIP domain); the interaction is dependent on GTP. Interacts with MON2.

The protein localises to the golgi apparatus. In terms of biological role, recruits golgins such as IMH1 to the Golgi. Can bind and hydrolyze GTP. May be involved in trafficking events within the endosomal system. This Saccharomyces cerevisiae (strain ATCC 204508 / S288c) (Baker's yeast) protein is ADP-ribosylation factor-like protein 1 (ARL1).